A 569-amino-acid polypeptide reads, in one-letter code: Urease subunit alpha (569 aa).

A Urease domain is found at 131 to 569 (GGIDTHIHFI…LPLAQRYLLL (439 aa)). The Ni(2+) site is built by His-136, His-138, and Lys-219. Position 219 is an N6-carboxylysine (Lys-219). His-221 lines the substrate pocket. The Ni(2+) site is built by His-248 and His-274. The Proton donor role is filled by His-322. A Ni(2+)-binding site is contributed by Asp-362.

The protein belongs to the metallo-dependent hydrolases superfamily. Urease alpha subunit family. Heterotrimer of UreA (gamma), UreB (beta) and UreC (alpha) subunits. Three heterotrimers associate to form the active enzyme. It depends on Ni cation as a cofactor. In terms of processing, carboxylation allows a single lysine to coordinate two nickel ions.

The protein resides in the cytoplasm. It catalyses the reaction urea + 2 H2O + H(+) = hydrogencarbonate + 2 NH4(+). It functions in the pathway nitrogen metabolism; urea degradation; CO(2) and NH(3) from urea (urease route): step 1/1. This chain is Urease subunit alpha, found in Synechococcus sp. (strain CC9605).